We begin with the raw amino-acid sequence, 267 residues long: Hydroxyethylthiazole kinase (267 aa).

Substrate is bound at residue Met46. ATP-binding residues include Arg121 and Thr167. Ala194 contacts substrate.

This sequence belongs to the Thz kinase family. Mg(2+) is required as a cofactor.

It carries out the reaction 5-(2-hydroxyethyl)-4-methylthiazole + ATP = 4-methyl-5-(2-phosphooxyethyl)-thiazole + ADP + H(+). The protein operates within cofactor biosynthesis; thiamine diphosphate biosynthesis; 4-methyl-5-(2-phosphoethyl)-thiazole from 5-(2-hydroxyethyl)-4-methylthiazole: step 1/1. Its function is as follows. Catalyzes the phosphorylation of the hydroxyl group of 4-methyl-5-beta-hydroxyethylthiazole (THZ). In Rhizobium leguminosarum bv. trifolii (strain WSM2304), this protein is Hydroxyethylthiazole kinase.